We begin with the raw amino-acid sequence, 500 residues long: Pyridine nucleotide-disulfide oxidoreductase domain-containing protein 1 (500 aa).

At Met-1 the chain carries N-acetylmethionine. Positions 211–235 are disordered; the sequence is TRYTTEGRKKEARSKSKADNVGSAL. Over residues 213-228 the composition is skewed to basic and acidic residues; it reads YTTEGRKKEARSKSKA.

Belongs to the class-I pyridine nucleotide-disulfide oxidoreductase family. PYROXD1 subfamily. Requires FAD as cofactor.

The protein resides in the nucleus. Its subcellular location is the cytoplasm. It is found in the myofibril. The protein localises to the sarcomere. Probable FAD-dependent oxidoreductase; involved in the cellular oxidative stress response. Required for normal sarcomere structure and muscle fiber integrity. The polypeptide is Pyridine nucleotide-disulfide oxidoreductase domain-containing protein 1 (PYROXD1) (Homo sapiens (Human)).